The primary structure comprises 550 residues: 2-succinyl-5-enolpyruvyl-6-hydroxy-3-cyclohexene-1-carboxylate synthase (550 aa).

The protein belongs to the TPP enzyme family. MenD subfamily. Homodimer. The cofactor is Mg(2+). Mn(2+) is required as a cofactor. Thiamine diphosphate serves as cofactor.

It carries out the reaction isochorismate + 2-oxoglutarate + H(+) = 5-enolpyruvoyl-6-hydroxy-2-succinyl-cyclohex-3-ene-1-carboxylate + CO2. It functions in the pathway quinol/quinone metabolism; 1,4-dihydroxy-2-naphthoate biosynthesis; 1,4-dihydroxy-2-naphthoate from chorismate: step 2/7. The protein operates within quinol/quinone metabolism; menaquinone biosynthesis. Catalyzes the thiamine diphosphate-dependent decarboxylation of 2-oxoglutarate and the subsequent addition of the resulting succinic semialdehyde-thiamine pyrophosphate anion to isochorismate to yield 2-succinyl-5-enolpyruvyl-6-hydroxy-3-cyclohexene-1-carboxylate (SEPHCHC). The sequence is that of 2-succinyl-5-enolpyruvyl-6-hydroxy-3-cyclohexene-1-carboxylate synthase from Desulfitobacterium hafniense (strain DSM 10664 / DCB-2).